Consider the following 100-residue polypeptide: NADH-quinone oxidoreductase subunit K (100 aa).

Helical transmembrane passes span 4–24 (LTHG…GLVI), 28–48 (LLFM…AFVV), and 60–80 (IMYI…LALL).

It belongs to the complex I subunit 4L family. In terms of assembly, NDH-1 is composed of 13 different subunits. Subunits NuoA, H, J, K, L, M, N constitute the membrane sector of the complex.

It localises to the cell inner membrane. It catalyses the reaction a quinone + NADH + 5 H(+)(in) = a quinol + NAD(+) + 4 H(+)(out). In terms of biological role, NDH-1 shuttles electrons from NADH, via FMN and iron-sulfur (Fe-S) centers, to quinones in the respiratory chain. The immediate electron acceptor for the enzyme in this species is believed to be ubiquinone. Couples the redox reaction to proton translocation (for every two electrons transferred, four hydrogen ions are translocated across the cytoplasmic membrane), and thus conserves the redox energy in a proton gradient. The sequence is that of NADH-quinone oxidoreductase subunit K from Klebsiella pneumoniae (strain 342).